We begin with the raw amino-acid sequence, 395 residues long: Elongation factor Tu (395 aa).

In terms of domain architecture, tr-type G spans 10–204; sequence KPHVNIGTIG…AVDEYIPTPQ (195 aa). The interval 19–26 is G1; that stretch reads GHVDHGKT. Residue 19–26 participates in GTP binding; that stretch reads GHVDHGKT. Residue Thr26 participates in Mg(2+) binding. A G2 region spans residues 60–64; that stretch reads GITIS. Residues 81–84 form a G3 region; sequence DCPG. Residues 81 to 85 and 136 to 139 contribute to the GTP site; these read DCPGH and NKCD. The tract at residues 136-139 is G4; it reads NKCD. The interval 174-176 is G5; it reads SAL.

It belongs to the TRAFAC class translation factor GTPase superfamily. Classic translation factor GTPase family. EF-Tu/EF-1A subfamily. Monomer.

It localises to the cytoplasm. It carries out the reaction GTP + H2O = GDP + phosphate + H(+). GTP hydrolase that promotes the GTP-dependent binding of aminoacyl-tRNA to the A-site of ribosomes during protein biosynthesis. The polypeptide is Elongation factor Tu (Geobacillus stearothermophilus (Bacillus stearothermophilus)).